The primary structure comprises 776 residues: Lysyl oxidase homolog 2 (776 aa).

The N-terminal stretch at 1–25 (MEIPFGSCLYSCLALLVLLPSLSLA) is a signal peptide. SRCR domains lie at 61–162 (VRLA…VVCS), 191–305 (IRPI…VSCV), 329–428 (VRLR…VRCN), and 438–546 (VRLN…VACS). 9 cysteine pairs are disulfide-bonded: C87–C151, C100–C161, C131–C141, C221–C294, C234–C304, C268–C278, C354–C417, C367–C427, and C398–C408. An N-linked (GlcNAc...) asparagine glycan is attached at N267. N291 carries an N-linked (GlcNAc...) asparagine glycan. N458 carries N-linked (GlcNAc...) asparagine glycosylation. 3 disulfide bridges follow: C467–C532, C480–C545, and C514–C524. The interval 550 to 753 (PDLVLNAEIV…WMYNCHVGGA (204 aa)) is lysyl-oxidase like. D551 and L552 together coordinate Ca(2+). 4 cysteine pairs are disulfide-bonded: C575/C627, C581/C697, C659/C675, and C665/C687. Residues H628, H630, and H632 each coordinate Cu cation. A glycan (N-linked (GlcNAc...) asparagine) is linked at N646. Residues 655-691 (KASFCLEDTECEGDIQKSYECANFGEQGITMGCWDMY) constitute a cross-link (lysine tyrosylquinone (Lys-Tyr)). Y691 is modified (2',4',5'-topaquinone). E724, D726, N729, and N730 together coordinate Ca(2+). Cysteines 734 and 748 form a disulfide.

It belongs to the lysyl oxidase family. As to quaternary structure, component of some chromatin repressor complex. Interacts with SNAI1. Interacts with TAF10. Interacts with HSPA5. Interacts with EFEMP2. Requires Cu cation as cofactor. Lysine tyrosylquinone residue serves as cofactor. Post-translationally, the lysine tyrosylquinone cross-link (LTQ) is generated by condensation of the epsilon-amino group of a lysine with a topaquinone produced by oxidation of tyrosine. N-glycosylated. N-glycosylation on Asn-458 and Asn-646 may be essential for proper folding and secretion; may be composed of a fucosylated carbohydrates attached to a trimannose N-linked glycan core.

It is found in the secreted. Its subcellular location is the extracellular space. It localises to the extracellular matrix. The protein resides in the basement membrane. The protein localises to the nucleus. It is found in the chromosome. Its subcellular location is the endoplasmic reticulum. It carries out the reaction L-lysyl-[protein] + O2 + H2O = (S)-2-amino-6-oxohexanoyl-[protein] + H2O2 + NH4(+). Specifically inhibited by a mouse monoclonal antibody AB0023, inhibition occurs in a non-competitive manner. In terms of biological role, mediates the post-translational oxidative deamination of lysine residues on target proteins leading to the formation of deaminated lysine (allysine). Acts as a transcription corepressor and specifically mediates deamination of trimethylated 'Lys-4' of histone H3 (H3K4me3), a specific tag for epigenetic transcriptional activation. Shows no activity against histone H3 when it is trimethylated on 'Lys-9' (H3K9me3) or 'Lys-27' (H3K27me3) or when 'Lys-4' is monomethylated (H3K4me1) or dimethylated (H3K4me2). Also mediates deamination of methylated TAF10, a member of the transcription factor IID (TFIID) complex, which induces release of TAF10 from promoters, leading to inhibition of TFIID-dependent transcription. LOXL2-mediated deamination of TAF10 results in transcriptional repression of genes required for embryonic stem cell pluripotency including POU5F1/OCT4, NANOG, KLF4 and SOX2. Involved in epithelial to mesenchymal transition (EMT) via interaction with SNAI1 and participates in repression of E-cadherin CDH1, probably by mediating deamination of histone H3. During EMT, involved with SNAI1 in negatively regulating pericentromeric heterochromatin transcription. SNAI1 recruits LOXL2 to pericentromeric regions to oxidize histone H3 and repress transcription which leads to release of heterochromatin component CBX5/HP1A, enabling chromatin reorganization and acquisition of mesenchymal traits. Interacts with the endoplasmic reticulum protein HSPA5 which activates the IRE1-XBP1 pathway of the unfolded protein response, leading to expression of several transcription factors involved in EMT and subsequent EMT induction. When secreted into the extracellular matrix, promotes cross-linking of extracellular matrix proteins by mediating oxidative deamination of peptidyl lysine residues in precursors to fibrous collagen and elastin. Acts as a regulator of sprouting angiogenesis, probably via collagen IV scaffolding. Acts as a regulator of chondrocyte differentiation, probably by regulating expression of factors that control chondrocyte differentiation. This Rattus norvegicus (Rat) protein is Lysyl oxidase homolog 2 (Loxl2).